Consider the following 1318-residue polypeptide: Maestro heat-like repeat family member 5 (1318 aa).

A disordered region spans residues 1 to 38 (MDRQCSERPYSCTPTGRVSSAVSQNSRISPPVSTSMKD). Residues 12 to 38 (CTPTGRVSSAVSQNSRISPPVSTSMKD) show a composition bias toward polar residues. One copy of the HEAT 1 repeat lies at 581-618 (DELHFLLSHLYIWLASEKAHERQRAVHSCMILLKFLNH). The tract at residues 676-695 (ESQAPKELSQAHSDGAPLWN) is disordered. HEAT repeat units follow at residues 769 to 811 (GAKL…SHTC), 840 to 880 (PTSH…LLAA), 996 to 1033 (RQIP…SPVL), 1037 to 1074 (LPKQ…HPDK), 1076 to 1113 (SLLQ…RLGA), 1118 to 1155 (SQSL…AMAD), 1164 to 1200 (QVHQ…LLRW), and 1278 to 1315 (VDTN…VSAR).

The polypeptide is Maestro heat-like repeat family member 5 (MROH5) (Homo sapiens (Human)).